A 96-amino-acid polypeptide reads, in one-letter code: MNKKAIVGIFMSILMAGLVGCAGSSDAQAGDDLKPVIYLYPQEDNTEISVSLDYNGNLVDLIPEFNADKTWNVTANKDGKITFEGQTYDYLFWEGD.

Residues 1 to 28 form the signal peptide; it reads MNKKAIVGIFMSILMAGLVGCAGSSDAQ.

This is an uncharacterized protein from Butyrivibrio fibrisolvens.